We begin with the raw amino-acid sequence, 423 residues long: Histidine--tRNA ligase (423 aa).

This sequence belongs to the class-II aminoacyl-tRNA synthetase family. As to quaternary structure, homodimer.

It localises to the cytoplasm. The catalysed reaction is tRNA(His) + L-histidine + ATP = L-histidyl-tRNA(His) + AMP + diphosphate + H(+). The protein is Histidine--tRNA ligase of Halorhodospira halophila (strain DSM 244 / SL1) (Ectothiorhodospira halophila (strain DSM 244 / SL1)).